We begin with the raw amino-acid sequence, 229 residues long: DNA mismatch repair protein MutH (229 aa).

The protein belongs to the MutH family.

Its subcellular location is the cytoplasm. Its function is as follows. Sequence-specific endonuclease that cleaves unmethylated GATC sequences. It is involved in DNA mismatch repair. The polypeptide is DNA mismatch repair protein MutH (Shigella dysenteriae serotype 1 (strain Sd197)).